Here is a 1135-residue protein sequence, read N- to C-terminus: Peroxisomal ATPase PEX6 (1135 aa).

853–860 (GPPGTGKT) is a binding site for ATP.

Belongs to the AAA ATPase family. In terms of assembly, interacts with PEX1; forming the PEX1-PEX6 AAA ATPase complex, which is composed of a heterohexamer formed by a trimer of PEX1-PEX6 dimers.

The protein localises to the cytoplasm. It localises to the cytosol. Its subcellular location is the peroxisome membrane. The catalysed reaction is ATP + H2O = ADP + phosphate + H(+). Functionally, component of the PEX1-PEX6 AAA ATPase complex, a protein dislocase complex that mediates the ATP-dependent extraction of the PEX5 receptor from peroxisomal membranes, an essential step for PEX5 recycling. Specifically recognizes PEX5 monoubiquitinated at 'Cys-6', and pulls it out of the peroxisome lumen through the PEX2-PEX10-PEX12 retrotranslocation channel. Extraction by the PEX1-PEX6 AAA ATPase complex is accompanied by unfolding of the TPR repeats and release of bound cargo from PEX5. The protein is Peroxisomal ATPase PEX6 (PEX6) of Pichia angusta (Yeast).